We begin with the raw amino-acid sequence, 396 residues long: MRFIDQLDIAGKKLLMRVDFNVPLDGETITDDNRIKAAVPTFKYALEKGASVIVMAHLGKPKGKRVDSLSLAPAAKRLGEYLGMEVPLAPDCIGSEVEKMAAELKPGQVMMLENLRFHAEEQAKTPEERGDFGKQLAALADIYVNDAFGVAHRANASVVDVPYAAKECCAGFLLKLEWEYLGEALKNARKPYIAVSGGAKVSSKLGILNNLIGKVDDFIIGGAMANTFLLAQGKAVGKSLVEESLVDTAKEIMDKAASSGTTLHLPTDFIWGKDIETAQGVCDGDSVPEDGMLLDIGPESAKKFCEVIERSKTIVWNGPMGLFEKEPFAQGSLKVCEVMANLDDATTIVGGGDTDAVVHQAKLEDKFTFISTGGGSFLEFLEGKELPAFKALKENS.

Substrate contacts are provided by residues 19 to 21 (DFN), Arg34, 57 to 60 (HLGK), Arg116, and Arg153. ATP is bound by residues Lys204, Glu324, and 351 to 354 (GGDT).

It belongs to the phosphoglycerate kinase family. In terms of assembly, monomer.

The protein localises to the cytoplasm. The enzyme catalyses (2R)-3-phosphoglycerate + ATP = (2R)-3-phospho-glyceroyl phosphate + ADP. The protein operates within carbohydrate degradation; glycolysis; pyruvate from D-glyceraldehyde 3-phosphate: step 2/5. In Maridesulfovibrio salexigens (strain ATCC 14822 / DSM 2638 / NCIMB 8403 / VKM B-1763) (Desulfovibrio salexigens), this protein is Phosphoglycerate kinase.